A 237-amino-acid chain; its full sequence is Purine nucleoside phosphorylase DeoD-type (237 aa).

His-4 contributes to the a purine D-ribonucleoside binding site. Phosphate is bound by residues Gly-20, Arg-24, Arg-43, and 87–90 (RVGS). A purine D-ribonucleoside contacts are provided by residues 179-181 (EME) and 203-204 (SD). Residue Asp-204 is the Proton donor of the active site.

Belongs to the PNP/UDP phosphorylase family. As to quaternary structure, homohexamer; trimer of homodimers.

It carries out the reaction a purine D-ribonucleoside + phosphate = a purine nucleobase + alpha-D-ribose 1-phosphate. It catalyses the reaction a purine 2'-deoxy-D-ribonucleoside + phosphate = a purine nucleobase + 2-deoxy-alpha-D-ribose 1-phosphate. Its function is as follows. Catalyzes the reversible phosphorolytic breakdown of the N-glycosidic bond in the beta-(deoxy)ribonucleoside molecules, with the formation of the corresponding free purine bases and pentose-1-phosphate. The sequence is that of Purine nucleoside phosphorylase DeoD-type from Dichelobacter nodosus (strain VCS1703A).